The following is a 546-amino-acid chain: MAAKDVKFGNDARVKMLEGVNILADAVKVTLGPKGRNVVLDKSFGAPTITKDGVSVAREIELEDKFQNMGAQMVKQVASQANDVAGDGTTTATVLAQAIVNEGLKAVAAGMNPMDLKRGIDKAVAAAVEELKALSKDCSTSTEIEQVGTISANSDSSVGKIIAEAMEKVGRDGVITVEEGQALHDELDVVEGMQFDRGYLSPYFINNQESGSVELESPFILLVDKKISNIRELLPALEAVAKASRPLLIIAEDVEGEALATLVVNNMRGIVKVAAVKAPGFGDRRKAMLQDIAILTGGTVISEEVGLELEKATLEDLGQAKRVSITKENTTIIDGVGEEAMIQGRVAQIRQQIEDATSDYDKEKLQERVAKLAGGVAVIKVGAATEVEMKEKKDRVEDALHATRAAVEEGIVAGGGVALIRAASKIVDLQGDNEEQNVGIRVALRAMEAPLRQITKNAGDEESVVANNVRAGEGSYGYNAATGVYGDMLEMGILDPTKVTRSALQFAASVAGLMITTEAMVTDLPQKDSGMPDMGGMGGMGGMGMM.

Residues 30–33 (TLGP), Lys-51, 87–91 (DGTTT), Gly-415, 479–481 (NAA), and Asp-495 each bind ATP.

It belongs to the chaperonin (HSP60) family. As to quaternary structure, forms a cylinder of 14 subunits composed of two heptameric rings stacked back-to-back. Interacts with the co-chaperonin GroES.

The protein resides in the cytoplasm. The catalysed reaction is ATP + H2O + a folded polypeptide = ADP + phosphate + an unfolded polypeptide.. Its function is as follows. Together with its co-chaperonin GroES, plays an essential role in assisting protein folding. The GroEL-GroES system forms a nano-cage that allows encapsulation of the non-native substrate proteins and provides a physical environment optimized to promote and accelerate protein folding. This chain is Chaperonin GroEL 1, found in Vibrio vulnificus (strain CMCP6).